The chain runs to 152 residues: Ribonuclease HI (152 aa).

Residues 1–142 (MDSKVVIYTD…ADKLAVQGRE (142 aa)) form the RNase H type-1 domain. Positions 10, 48, 70, and 134 each coordinate Mg(2+).

This sequence belongs to the RNase H family. In terms of assembly, monomer. Mg(2+) is required as a cofactor.

The protein localises to the cytoplasm. It carries out the reaction Endonucleolytic cleavage to 5'-phosphomonoester.. Endonuclease that specifically degrades the RNA of RNA-DNA hybrids. The polypeptide is Ribonuclease HI (rnhA) (Rickettsia prowazekii (strain Madrid E)).